The sequence spans 178 residues: NADH-quinone oxidoreductase subunit B (178 aa).

[4Fe-4S] cluster contacts are provided by Cys-45, Cys-46, Cys-111, and Cys-140.

This sequence belongs to the complex I 20 kDa subunit family. In terms of assembly, NDH-1 is composed of 15 different subunits. Subunits NuoB, C, D, E, F, and G constitute the peripheral sector of the complex. The cofactor is [4Fe-4S] cluster.

It localises to the cell membrane. It carries out the reaction a quinone + NADH + 5 H(+)(in) = a quinol + NAD(+) + 4 H(+)(out). Its function is as follows. NDH-1 shuttles electrons from NADH, via FMN and iron-sulfur (Fe-S) centers, to quinones in the respiratory chain. The immediate electron acceptor for the enzyme in this species is believed to be a menaquinone. Couples the redox reaction to proton translocation (for every two electrons transferred, four hydrogen ions are translocated across the cytoplasmic membrane), and thus conserves the redox energy in a proton gradient. This chain is NADH-quinone oxidoreductase subunit B, found in Deinococcus geothermalis (strain DSM 11300 / CIP 105573 / AG-3a).